The following is a 186-amino-acid chain: MKLLAIISASLALAGFTTATPPPQTFSIKAKGNPKVPSARFDASRSNIFLNYGDSGAVCEVKPGCPKPKDAVFYLKDSILYLYTGSSNPVQKVFLDRSGFGQGKIGYLTGDGQLPSRWEVQGWTIDGAGNLKFKGKGLIACPTSDPKIKSWTVWADLGIATPGGNKGCLPFTAHTMKTKPVACKYT.

Residues 1-19 (MKLLAIISASLALAGFTTA) form the signal peptide.

This sequence belongs to the phiA family.

The protein localises to the secreted. It localises to the cell wall. Cell wall protein involved in development of asexual structures such as phialide and conidium development, and thus required for spore formation. Plays a role as a general stress protectant produced by the fungus in competition with antagonistic bacteria. This is Cell wall protein phiA from Arthroderma benhamiae (strain ATCC MYA-4681 / CBS 112371) (Trichophyton mentagrophytes).